The chain runs to 482 residues: UDP-N-acetylmuramoyl-L-alanyl-D-glutamate--2,6-diaminopimelate ligase (482 aa).

Ser30 is a binding site for UDP-N-acetyl-alpha-D-muramoyl-L-alanyl-D-glutamate. 111–117 (GTNGKTT) is a binding site for ATP. UDP-N-acetyl-alpha-D-muramoyl-L-alanyl-D-glutamate contacts are provided by residues 153-154 (TT), Ser180, Gln186, and Arg188. Lys220 bears the N6-carboxylysine mark. Meso-2,6-diaminopimelate is bound by residues Arg378, 402-405 (DNPR), Gly455, and Glu459. The short motif at 402–405 (DNPR) is the Meso-diaminopimelate recognition motif element.

It belongs to the MurCDEF family. MurE subfamily. Requires Mg(2+) as cofactor. Carboxylation is probably crucial for Mg(2+) binding and, consequently, for the gamma-phosphate positioning of ATP.

It is found in the cytoplasm. The enzyme catalyses UDP-N-acetyl-alpha-D-muramoyl-L-alanyl-D-glutamate + meso-2,6-diaminopimelate + ATP = UDP-N-acetyl-alpha-D-muramoyl-L-alanyl-gamma-D-glutamyl-meso-2,6-diaminopimelate + ADP + phosphate + H(+). The protein operates within cell wall biogenesis; peptidoglycan biosynthesis. Catalyzes the addition of meso-diaminopimelic acid to the nucleotide precursor UDP-N-acetylmuramoyl-L-alanyl-D-glutamate (UMAG) in the biosynthesis of bacterial cell-wall peptidoglycan. The protein is UDP-N-acetylmuramoyl-L-alanyl-D-glutamate--2,6-diaminopimelate ligase of Bacteroides thetaiotaomicron (strain ATCC 29148 / DSM 2079 / JCM 5827 / CCUG 10774 / NCTC 10582 / VPI-5482 / E50).